A 479-amino-acid polypeptide reads, in one-letter code: Solute carrier family 46 member 2 (479 aa).

At 1–23 (MGPGGTCPWSSRLSGFRVRTWIE) the chain is on the cytoplasmic side. The chain crosses the membrane as a helical span at residues 24–44 (PVVASTQVAGSLYDAGLLLVV). Over 45–80 (KESFKSEAGGSSNYSANQSLVEYQEDQQQKAISNFN) the chain is Extracellular. Residues asparagine 57 and asparagine 61 are each glycosylated (N-linked (GlcNAc...) asparagine). A helical membrane pass occupies residues 81–101 (IIYNLVLGLTPLLSAYGLGWL). Topologically, residues 102–110 (SDRYHRKIS) are cytoplasmic. A helical transmembrane segment spans residues 111 to 131 (ICTAMLGFLLSRIGLLLKVML). Topologically, residues 132-140 (DWPVEVMYG) are extracellular. A helical transmembrane segment spans residues 141–161 (AAALNGLCGSFSAYWSGVMAL). Residues 162–174 (GSLGCSEGRRSVR) lie on the Cytoplasmic side of the membrane. A helical membrane pass occupies residues 175-195 (LILIDLVLGLAGFSGSMASGH). Residues 196–207 (LFKQIVGHSAQG) lie on the Extracellular side of the membrane. Residues 208–228 (LLLTACSVGCAAFALFYSLFV) traverse the membrane as a helical segment. Over 229-281 (LKVPESKPNKVHPTVDTVSGMMGTYRTLDPDQQDKQNVPRNPRTPGKGKSSQR) the chain is Cytoplasmic. A disordered region spans residues 255–277 (TLDPDQQDKQNVPRNPRTPGKGK). The helical transmembrane segment at 282–302 (EVVALLFVGAIIYDLAAVGTV) threads the bilayer. Residues 303-321 (DVMALFVLKEPLHWNQVQL) lie on the Extracellular side of the membrane. Residues 322–342 (GYGMASGYIIFITSFLGVLVF) traverse the membrane as a helical segment. The Cytoplasmic segment spans residues 343-348 (SRCFRD). A helical membrane pass occupies residues 349–369 (TTMIIIGMLSFGSGALLLAFV). At 370 to 371 (KE) the chain is on the extracellular side. The chain crosses the membrane as a helical span at residues 372-392 (TYMFYIARAIMLFALIPITTI). At 393-407 (RSAMSKLIKDSSYGK) the chain is on the cytoplasmic side. Residues 408–428 (IFVILQLCLTLTGVVTSTIYN) traverse the membrane as a helical segment. The Extracellular portion of the chain corresponds to 429–441 (KIYQLTLDKFIGT). Residues 442-462 (CFVLSSFLSFLAIVPIGVVAY) traverse the membrane as a helical segment. Residues 463 to 479 (KQVPRSQQGECAEKQRS) are Cytoplasmic-facing.

This sequence belongs to the major facilitator superfamily. SLC46A family. Post-translationally, glycosylated. Expressed on cortical epithelial cells in the thymus. Mainly expressed in the thymic cortex and is highly enriched in SCID thymus. Also expressed in lymph nodes, heart, fetal liver, brain, spleen, intestine and kidney, but not in adult liver, skin, skeletal muscle and lung. Expressed in skin epidermis.

The protein resides in the endosome membrane. Its subcellular location is the cell membrane. The catalysed reaction is N-acetyl-beta-D-glucosaminyl-(1-&gt;4)-1,6-anhydro-N-acetyl-beta-D-muramoyl-L-alanyl-gamma-D-glutamyl-meso-2,6-diaminopimeloyl-D-alanine(out) + n H(+)(out) = N-acetyl-beta-D-glucosaminyl-(1-&gt;4)-1,6-anhydro-N-acetyl-beta-D-muramoyl-L-alanyl-gamma-D-glutamyl-meso-2,6-diaminopimeloyl-D-alanine(in) + n H(+)(in). It catalyses the reaction L-alanyl-gamma-D-glutamyl-meso-2,6-diaminopimelate(out) + n H(+)(out) = L-alanyl-gamma-D-glutamyl-meso-2,6-diaminopimelate(in) + n H(+)(in). It carries out the reaction N-acetyl-D-muramoyl-L-alanyl-D-isoglutamine(out) + n H(+)(out) = N-acetyl-D-muramoyl-L-alanyl-D-isoglutamine(in) + n H(+)(in). The enzyme catalyses 2',3'-cGAMP(out) + n H(+)(out) = 2',3'-cGAMP(in) + n H(+)(in). The catalysed reaction is 3',3'-cGAMP(out) + n H(+)(out) = 3',3'-cGAMP(in) + n H(+)(in). Down-regulated by the anti-inflammatory drug methotrexate. Proton-coupled transporter that delivers pathogen-associated or danger-associated molecular patterns to cytosolic pattern recognition receptors as part of the innate immune response to microbes or tissue injury. Has selectivity toward muropeptides that contain the amino acid diaminopimelic acid (DAP-type peptidoglycan muropeptides) including Tri-DAP and tracheal toxin (TCT), common in Gram-negative bacteria and Gram-positive bacilli. In the context of immune recognition of skin microbiota, shuttles bacterial muropeptides across the endolysosomal membranes into the cytosol for recognition by NOD1, triggering MYD88-dependent secretion of IL1A and neutrophil recruitment in a pyroptosis-type inflammatory process. To a lesser extent and redundantly, transports muramyl dipeptides derived from most bacterial proteoglycans, eliciting NOD2 receptor activation and downstream inflammatory responses. Postulated to function as an importer of cyclic GMP-AMP dinucleotides (cGAMPs) in monocyte and macrophage cell lineages. Selectively imports cGAMPs derived from pathogenic bacteria such as 3'3'-cGAMP thus providing for differential immune recognition of pathogenic versus commensal bacteria. During tumorigenesis may transport extracellular tumor-derived 2'3'-cGAMP across the plasma membrane of M1-polarized macrophages to activate the anti-tumoral stimulator of interferon genes (STING) pathway. The transport mechanism, its electrogenicity and stoichiometry remain to be elucidated. The chain is Solute carrier family 46 member 2 from Mus musculus (Mouse).